Consider the following 324-residue polypeptide: Quinolinate synthase (324 aa).

His39 and Ser56 together coordinate iminosuccinate. A [4Fe-4S] cluster-binding site is contributed by Cys101. Iminosuccinate contacts are provided by residues 127–129 and Ser144; that span reads YIN. Residue Cys187 coordinates [4Fe-4S] cluster. Residues 213 to 215 and Thr230 contribute to the iminosuccinate site; that span reads HPE. Position 280 (Cys280) interacts with [4Fe-4S] cluster.

The protein belongs to the quinolinate synthase family. Type 2 subfamily. It depends on [4Fe-4S] cluster as a cofactor.

It localises to the cytoplasm. It carries out the reaction iminosuccinate + dihydroxyacetone phosphate = quinolinate + phosphate + 2 H2O + H(+). The protein operates within cofactor biosynthesis; NAD(+) biosynthesis; quinolinate from iminoaspartate: step 1/1. Functionally, catalyzes the condensation of iminoaspartate with dihydroxyacetone phosphate to form quinolinate. The protein is Quinolinate synthase of Nostoc sp. (strain PCC 7120 / SAG 25.82 / UTEX 2576).